Reading from the N-terminus, the 76-residue chain is Large ribosomal subunit protein bL31 (76 aa).

Belongs to the bacterial ribosomal protein bL31 family. Type A subfamily. As to quaternary structure, part of the 50S ribosomal subunit.

Its function is as follows. Binds the 23S rRNA. The chain is Large ribosomal subunit protein bL31 from Gluconacetobacter diazotrophicus (strain ATCC 49037 / DSM 5601 / CCUG 37298 / CIP 103539 / LMG 7603 / PAl5).